The chain runs to 147 residues: MSPKFMFFSIIAVWSCAAVTEALFIQHRSLANFFFMTLTAAKRSPQEYDGYGNYCGWGGEGTPVDSIDRCCQVHDNCYGTVNENECGHYIRNVKLIDYDWHMEGTEIVCDPKDDACGRALCKCDKDIIDCFNENDKDYNPEYNKVIG.

Residues 1–22 form the signal peptide; it reads MSPKFMFFSIIAVWSCAAVTEA. A propeptide spanning residues 23–28 is cleaved from the precursor; it reads LFIQHR. 5 cysteine pairs are disulfide-bonded: C55–C71, C70–C130, C77–C123, C86–C116, and C109–C121. 2 residues coordinate Ca(2+): G56 and G58. Residue H74 is part of the active site. D75 is a binding site for Ca(2+). Residue D124 is part of the active site.

It depends on Ca(2+) as a cofactor. In terms of tissue distribution, expressed by the venom gland.

Its subcellular location is the secreted. The catalysed reaction is a 1,2-diacyl-sn-glycero-3-phosphocholine + H2O = a 1-acyl-sn-glycero-3-phosphocholine + a fatty acid + H(+). PLA2 catalyzes the calcium-dependent hydrolysis of the 2-acyl groups in 3-sn-phosphoglycerides. The polypeptide is Phospholipase A2 SSD1043 (Scolopendra dehaani (Thai centipede)).